The following is a 378-amino-acid chain: TelA-like protein SAV1406 (378 aa).

Belongs to the TelA family.

The protein is TelA-like protein SAV1406 of Staphylococcus aureus (strain Mu50 / ATCC 700699).